Here is a 1040-residue protein sequence, read N- to C-terminus: Multidrug resistance protein MdtB (1040 aa).

Transmembrane regions (helical) follow at residues 16-36 (FILR…AGLV), 342-362 (DVQF…YLFL), 373-393 (IAVP…GFSV), 396-416 (LTLM…IVVI), 440-460 (IGFT…PLLF), 472-492 (FAVT…TLTP), 537-557 (WITL…YIVI), 865-885 (STIW…GVLY), 888-908 (FIHP…ALLA), 911-931 (ISGS…IGIV), 968-988 (ILMT…STGV), and 1002-1022 (GGLV…YLLF).

This sequence belongs to the resistance-nodulation-cell division (RND) (TC 2.A.6) family. MdtB subfamily. Part of a tripartite efflux system composed of MdtA, MdtB and MdtC. MdtB forms a heteromultimer with MdtC.

It is found in the cell inner membrane. This Musicola paradisiaca (strain Ech703) (Dickeya paradisiaca) protein is Multidrug resistance protein MdtB.